The chain runs to 148 residues: MTARRVVATGTFDILHPGHVYYLTESRKLGDELWVIVARDENVKHKPRPILPEAQRLAMVSALRPVDHAILGDHTDMFCPIDDIRPAVITIGFNQYFDEEKLKGQLAERNLPAEVVRIGKYEDGDLASSRMIVQRIVEARGSGDQRIG.

ATP-binding positions include 11 to 12 (TF), 16 to 19 (HPGH), asparagine 94, and tyrosine 121.

It belongs to the archaeal FAD synthase family. As to quaternary structure, homodimer. A divalent metal cation serves as cofactor.

It catalyses the reaction FMN + ATP + H(+) = FAD + diphosphate. It functions in the pathway cofactor biosynthesis; FAD biosynthesis; FAD from FMN: step 1/1. Catalyzes the transfer of the AMP portion of ATP to flavin mononucleotide (FMN) to produce flavin adenine dinucleotide (FAD) coenzyme. In Methanoregula boonei (strain DSM 21154 / JCM 14090 / 6A8), this protein is FAD synthase.